A 360-amino-acid polypeptide reads, in one-letter code: Photosystem II protein D1 2 (360 aa).

3 consecutive transmembrane segments (helical) span residues 29–46 (YIGW…TAVT), 118–133 (HYMI…QWEY), and 142–156 (WICV…ATYS). H118 contacts chlorophyll a. Y126 contributes to the pheophytin a binding site. [CaMn4O5] cluster-binding residues include D170 and E189. Residues 197–218 (FHMFGVAGVLGGSLFAAMHGSL) form a helical membrane-spanning segment. H198 is a chlorophyll a binding site. Residues H215 and 264-265 (SF) contribute to the a quinone site. A Fe cation-binding site is contributed by H215. H272 is a Fe cation binding site. Residues 274–288 (FLGAWPVVCIWLTAM) form a helical membrane-spanning segment. Residues H332, E333, D342, and A344 each contribute to the [CaMn4O5] cluster site. A propeptide spanning residues 345–360 (AGESAPVALTAPVING) is cleaved from the precursor.

This sequence belongs to the reaction center PufL/M/PsbA/D family. In terms of assembly, PSII is composed of 1 copy each of membrane proteins PsbA, PsbB, PsbC, PsbD, PsbE, PsbF, PsbH, PsbI, PsbJ, PsbK, PsbL, PsbM, PsbT, PsbX, PsbY, PsbZ, Psb30/Ycf12, peripheral proteins PsbO, CyanoQ (PsbQ), PsbU, PsbV and a large number of cofactors. It forms dimeric complexes. Requires The D1/D2 heterodimer binds P680, chlorophylls that are the primary electron donor of PSII, and subsequent electron acceptors. It shares a non-heme iron and each subunit binds pheophytin, quinone, additional chlorophylls, carotenoids and lipids. D1 provides most of the ligands for the Mn4-Ca-O5 cluster of the oxygen-evolving complex (OEC). There is also a Cl(-1) ion associated with D1 and D2, which is required for oxygen evolution. The PSII complex binds additional chlorophylls, carotenoids and specific lipids. as cofactor. Post-translationally, tyr-161 forms a radical intermediate that is referred to as redox-active TyrZ, YZ or Y-Z. C-terminally processed by CtpA; processing is essential to allow assembly of the oxygen-evolving complex and thus photosynthetic growth.

The protein resides in the cellular thylakoid membrane. The catalysed reaction is 2 a plastoquinone + 4 hnu + 2 H2O = 2 a plastoquinol + O2. Photosystem II (PSII) is a light-driven water:plastoquinone oxidoreductase that uses light energy to abstract electrons from H(2)O, generating O(2) and a proton gradient subsequently used for ATP formation. It consists of a core antenna complex that captures photons, and an electron transfer chain that converts photonic excitation into a charge separation. The D1/D2 (PsbA/PsbD) reaction center heterodimer binds P680, the primary electron donor of PSII as well as several subsequent electron acceptors. This Acaryochloris marina (strain MBIC 11017) protein is Photosystem II protein D1 2.